An 80-amino-acid chain; its full sequence is Large ribosomal subunit protein bL31B (80 aa).

It belongs to the bacterial ribosomal protein bL31 family. Type B subfamily. In terms of assembly, part of the 50S ribosomal subunit.

The protein is Large ribosomal subunit protein bL31B of Streptococcus pneumoniae serotype 2 (strain D39 / NCTC 7466).